The primary structure comprises 536 residues: MFS-type efflux pump MFS1 (536 aa).

Transmembrane regions (helical) follow at residues 30 to 50 (VTGL…LLVA), 80 to 100 (YLLT…FFPV), and 102 to 122 (WVFL…GAAP). Asparagine 123 carries N-linked (GlcNAc...) asparagine glycosylation. 3 helical membrane-spanning segments follow: residues 133–153 (VAGI…AYSI), 163–183 (GAIG…GGAF), and 191–211 (WCFY…LIFL). A glycan (N-linked (GlcNAc...) asparagine) is linked at asparagine 221. Transmembrane regions (helical) follow at residues 234–254 (IGTA…QWGG), 264–284 (IIAL…FQIR), 306–326 (FFLF…PIWF), 342–362 (IPMV…VTAI), 366–386 (APLY…LTTF), 400–420 (IIFG…AQAV), 426–446 (VAVG…LFVS), and 503–523 (TWYV…GMEW).

It belongs to the major facilitator superfamily. TCR/Tet family.

It is found in the cell membrane. Its function is as follows. MFS-type efflux pump involved in the modulation susceptibility to azoles, including fluconazole, itraconazole, ketoconazole, miconazole and voriconazole. Confers also increased resistance chloramphenicol and thiamphenicol, suggesting that it acts as a pleiotropic drug transporter with a broad substrate spectrum. Finally, increases the tolerance to cycloheximide when expressed in S.cerevisiae, but not in dermatophyte species. The sequence is that of MFS-type efflux pump MFS1 from Trichophyton rubrum (strain ATCC MYA-4607 / CBS 118892) (Athlete's foot fungus).